Reading from the N-terminus, the 298-residue chain is tRNA U34 carboxymethyltransferase (298 aa).

Residues Lys69, Trp83, Lys88, Gly107, 129 to 131, 156 to 157, Tyr176, and Arg291 contribute to the carboxy-S-adenosyl-L-methionine site; these read DPS and VE.

This sequence belongs to the class I-like SAM-binding methyltransferase superfamily. CmoB family. In terms of assembly, homotetramer.

It carries out the reaction carboxy-S-adenosyl-L-methionine + 5-hydroxyuridine(34) in tRNA = 5-carboxymethoxyuridine(34) in tRNA + S-adenosyl-L-homocysteine + H(+). Functionally, catalyzes carboxymethyl transfer from carboxy-S-adenosyl-L-methionine (Cx-SAM) to 5-hydroxyuridine (ho5U) to form 5-carboxymethoxyuridine (cmo5U) at position 34 in tRNAs. The protein is tRNA U34 carboxymethyltransferase of Campylobacter curvus (strain 525.92).